A 400-amino-acid polypeptide reads, in one-letter code: Canavanine gamma-lyase (400 aa).

K213 is modified (N6-(pyridoxal phosphate)lysine).

Belongs to the trans-sulfuration enzymes family. Requires pyridoxal 5'-phosphate as cofactor.

The catalysed reaction is L-canavanine + H2O = N-hydroxyguanidine + L-homoserine. In terms of biological role, lyase involved in the degradation of canavanine, the delta-oxa-analog of arginine, allowing growth on canavanine as sole nitrogen and carbon source. Catalyzes the elimination of hydroxyguanidine from canavanine with a subsequent water addition to yield homoserine. Is highly specific for canavanine and cannot use methionine, cystathionine or arginine. This chain is Canavanine gamma-lyase, found in Pseudomonas canavaninivorans.